We begin with the raw amino-acid sequence, 350 residues long: Bifunctional methylenetetrahydrofolate dehydrogenase/cyclohydrolase, mitochondrial (350 aa).

Residues 1-35 constitute a mitochondrion transit peptide; that stretch reads MAAASFITSLVTRLLRSAQSGRLHQRPFHLSAVRN. At Lys-50 the chain carries N6-acetyllysine; alternate. A Glycyl lysine isopeptide (Lys-Gly) (interchain with G-Cter in SUMO2); alternate cross-link involves residue Lys-50. Residues 84–88 and 131–133 each bind substrate; these read YVLNK and VQL. NAD(+) is bound by residues 200 to 202 and Arg-233; that span reads GRS. Position 309 to 313 (309 to 313) interacts with substrate; sequence PGGVG.

Belongs to the tetrahydrofolate dehydrogenase/cyclohydrolase family. Homodimer. The cofactor is Mg(2+).

The protein resides in the mitochondrion. The enzyme catalyses (6R)-5,10-methylene-5,6,7,8-tetrahydrofolate + NAD(+) = (6R)-5,10-methenyltetrahydrofolate + NADH. It carries out the reaction (6R)-5,10-methenyltetrahydrofolate + H2O = (6R)-10-formyltetrahydrofolate + H(+). In terms of biological role, although its dehydrogenase activity is NAD-specific, it can also utilize NADP at a reduced efficiency. The chain is Bifunctional methylenetetrahydrofolate dehydrogenase/cyclohydrolase, mitochondrial (MTHFD2) from Bos taurus (Bovine).